Reading from the N-terminus, the 376-residue chain is Cyclic GMP-AMP synthase-like receptor 1 (376 aa).

The Mg(2+) site is built by glutamate 77 and aspartate 79.

This sequence belongs to the mab-21 family. It depends on Mg(2+) as a cofactor. Mn(2+) serves as cofactor.

The catalysed reaction is UTP + ATP = 3',3'-cUAMP + 2 diphosphate. In terms of biological role, nucleotidyltransferase that catalyzes the formation of cyclic UMP-AMP (3',3'-cUAMP) from ATP and UTP and plays a key role in innate immunity. Acts as a key sensor of double-stranded RNA (dsRNA), the presence of dsRNA in the cytoplasm being a danger signal that triggers the immune responses. Directly binds dsRNA, activating the nucleotidyltransferase activity, leading to synthesis of 3',3'-cUAMP, a second messenger that binds to and activates Sting, thereby triggering the immune response via activation of the NF-kappa-B transcription factor. The protein is Cyclic GMP-AMP synthase-like receptor 1 of Stylophora pistillata (Smooth cauliflower coral).